The sequence spans 726 residues: Putative tyrosine-protein kinase AmsA (726 aa).

The next 2 membrane-spanning stretches (helical) occupy residues 32-52 (WMIV…SLFA) and 425-445 (ILIV…LVLM).

The protein belongs to the etk/wzc family.

The protein resides in the cell inner membrane. The catalysed reaction is L-tyrosyl-[protein] + ATP = O-phospho-L-tyrosyl-[protein] + ADP + H(+). It participates in glycan metabolism; exopolysaccharide biosynthesis. In terms of biological role, involved in the biosynthesis of amylovoran which functions as a virulence factor. This chain is Putative tyrosine-protein kinase AmsA (amsA), found in Erwinia amylovora (Fire blight bacteria).